The following is a 218-amino-acid chain: Glutathione S-transferase Mu 4 (218 aa).

Positions 1–88 constitute a GST N-terminal domain; that stretch reads MPMTLGYWDI…YIARKHNLCG (88 aa). Glutathione-binding positions include 7 to 8, 46 to 50, 59 to 60, and 72 to 73; these read YW, WLSEK, NL, and QS. Residues 90–208 enclose the GST C-terminal domain; the sequence is TEEEKIRVDI…KTSRFLRTPL (119 aa). Tyr-116 provides a ligand contact to substrate.

It belongs to the GST superfamily. Mu family. As to quaternary structure, homodimer.

Its subcellular location is the cytoplasm. It carries out the reaction RX + glutathione = an S-substituted glutathione + a halide anion + H(+). The catalysed reaction is 1-chloro-2,4-dinitrobenzene + glutathione = 2,4-dinitrophenyl-S-glutathione + chloride + H(+). The enzyme catalyses (13S,14S)-epoxy-(4Z,7Z,9E,11E,16Z,19Z)-docosahexaenoate + glutathione = (13R)-S-glutathionyl-(14S)-hydroxy-(4Z,7Z,9E,11E,16Z,19Z)-docosahexaenoate. It catalyses the reaction leukotriene C4 = leukotriene A4 + glutathione. Its function is as follows. Conjugation of reduced glutathione to a wide number of exogenous and endogenous hydrophobic electrophiles. Catalyzes the conjugation of leukotriene A4 with reduced glutathione (GSH) to form leukotriene C4. Can also catalyze the transfer of a glutathionyl group from glutathione (GSH) to 13(S),14(S)-epoxy-docosahexaenoic acid to form maresin conjugate in tissue regeneration 1 (MCTR1), a bioactive lipid mediator that possess potent anti-inflammatory and proresolving actions. This is Glutathione S-transferase Mu 4 (Gstm4) from Rattus norvegicus (Rat).